A 64-amino-acid polypeptide reads, in one-letter code: Conotoxin Cal6.26 (64 aa).

The N-terminal stretch at Met-1–Ser-22 is a signal peptide. Intrachain disulfides connect Cys-32–Cys-50, Cys-40–Cys-54, and Cys-49–Cys-60.

Expressed by the venom duct.

It is found in the secreted. Its function is as follows. Probable neurotoxin. The sequence is that of Conotoxin Cal6.26 from Californiconus californicus (California cone).